Reading from the N-terminus, the 162-residue chain is Ribosome maturation factor RimP (162 aa).

This sequence belongs to the RimP family.

It is found in the cytoplasm. In terms of biological role, required for maturation of 30S ribosomal subunits. This chain is Ribosome maturation factor RimP, found in Beutenbergia cavernae (strain ATCC BAA-8 / DSM 12333 / CCUG 43141 / JCM 11478 / NBRC 16432 / NCIMB 13614 / HKI 0122).